A 198-amino-acid polypeptide reads, in one-letter code: Holliday junction branch migration complex subunit RuvA (198 aa).

The domain I stretch occupies residues 1 to 63 (MYDYIKGQLT…EDAQLLFGFH (63 aa)). The segment at 64–142 (SEEEKDVFLK…EAPKEESSKP (79 aa)) is domain II. The tract at residues 143–147 (PKAKQ) is flexible linker. A domain III region spans residues 148-198 (QGNEQLDEAVEALLALGYKATELKKIRAFFEGTSETAEQYIKSALKMLMKG).

This sequence belongs to the RuvA family. As to quaternary structure, homotetramer. Forms an RuvA(8)-RuvB(12)-Holliday junction (HJ) complex. HJ DNA is sandwiched between 2 RuvA tetramers; dsDNA enters through RuvA and exits via RuvB. An RuvB hexamer assembles on each DNA strand where it exits the tetramer. Each RuvB hexamer is contacted by two RuvA subunits (via domain III) on 2 adjacent RuvB subunits; this complex drives branch migration. In the full resolvosome a probable DNA-RuvA(4)-RuvB(12)-RuvC(2) complex forms which resolves the HJ.

The protein resides in the cytoplasm. Functionally, the RuvA-RuvB-RuvC complex processes Holliday junction (HJ) DNA during genetic recombination and DNA repair, while the RuvA-RuvB complex plays an important role in the rescue of blocked DNA replication forks via replication fork reversal (RFR). RuvA specifically binds to HJ cruciform DNA, conferring on it an open structure. The RuvB hexamer acts as an ATP-dependent pump, pulling dsDNA into and through the RuvAB complex. HJ branch migration allows RuvC to scan DNA until it finds its consensus sequence, where it cleaves and resolves the cruciform DNA. This Streptococcus equi subsp. equi (strain 4047) protein is Holliday junction branch migration complex subunit RuvA.